The primary structure comprises 156 residues: ATP synthase subunit b (156 aa).

Residues 11 to 31 form a helical membrane-spanning segment; it reads LIAFVVFVIFCMKYVWPPIIG.

The protein belongs to the ATPase B chain family. As to quaternary structure, F-type ATPases have 2 components, F(1) - the catalytic core - and F(0) - the membrane proton channel. F(1) has five subunits: alpha(3), beta(3), gamma(1), delta(1), epsilon(1). F(0) has three main subunits: a(1), b(2) and c(10-14). The alpha and beta chains form an alternating ring which encloses part of the gamma chain. F(1) is attached to F(0) by a central stalk formed by the gamma and epsilon chains, while a peripheral stalk is formed by the delta and b chains.

The protein resides in the cell inner membrane. In terms of biological role, f(1)F(0) ATP synthase produces ATP from ADP in the presence of a proton or sodium gradient. F-type ATPases consist of two structural domains, F(1) containing the extramembraneous catalytic core and F(0) containing the membrane proton channel, linked together by a central stalk and a peripheral stalk. During catalysis, ATP synthesis in the catalytic domain of F(1) is coupled via a rotary mechanism of the central stalk subunits to proton translocation. Component of the F(0) channel, it forms part of the peripheral stalk, linking F(1) to F(0). The polypeptide is ATP synthase subunit b (Colwellia psychrerythraea (strain 34H / ATCC BAA-681) (Vibrio psychroerythus)).